The following is a 519-amino-acid chain: 4-nitrophenol 2-monooxygenase, oxygenase component (519 aa).

It belongs to the FADH(2)-utilizing monooxygenase family. As to quaternary structure, homotetramer. 4-nitrophenol 2-monooxygenase complex consists of an oxygenase component NphA1 and a flavin reductase component NphA2. FAD is required as a cofactor.

It catalyses the reaction 4-nitrophenol + NADH + O2 + H(+) = 4-nitrocatechol + NAD(+) + H2O. With respect to regulation, partially inhibited by concentrations of FAD above 10 uM and completely inhibited by concentrations above 50 uM. Functionally, utilizes the flavins supplied by NphA2 to catalyze the degradation of 4-nitrophenol (4-NP) via 4-nitrocatechol (4-NC) which is used as the sole carbon, nitrogen, and energy source. Can also degrade phenol and 4-chlorophenol as rapidly as 4-NP. In Rhodococcus sp, this protein is 4-nitrophenol 2-monooxygenase, oxygenase component (nphA1).